Consider the following 178-residue polypeptide: MSIEEIPEEIPQGADVTILSKNEKKARELIKKLHLKPVPGITRVTFKQKGNLIYAIEQPDVFKSAAGTYVVFGEAKVDDMNKRIAEAQAQQEQQEALTKAAADAETADKSPESITNDLQNASLEDKTVEEDEGEVDETGLDSKDIEIIVEQTQVSRAKAVKALRAHKGDMVNAIMELS.

The region spanning 20 to 84 (SKNEKKAREL…AKVDDMNKRI (65 aa)) is the NAC-A/B domain. Over residues 87–104 (AQAQQEQQEALTKAAADA) the composition is skewed to low complexity. Positions 87 to 142 (AQAQQEQQEALTKAAADAETADKSPESITNDLQNASLEDKTVEEDEGEVDETGLDS) are disordered. Polar residues predominate over residues 112-122 (ESITNDLQNAS). Acidic residues predominate over residues 127 to 139 (TVEEDEGEVDETG). Positions 140–178 (LDSKDIEIIVEQTQVSRAKAVKALRAHKGDMVNAIMELS) constitute a UBA domain.

It belongs to the NAC-alpha family. As to quaternary structure, part of the nascent polypeptide-associated complex (NAC), consisting of EGD2 and EGD1. NAC associates with ribosomes via EGD1.

The protein localises to the cytoplasm. It localises to the nucleus. In terms of biological role, component of the nascent polypeptide-associated complex (NAC), a dynamic component of the ribosomal exit tunnel, protecting the emerging polypeptides from interaction with other cytoplasmic proteins to ensure appropriate nascent protein targeting. The NAC complex also promotes mitochondrial protein import by enhancing productive ribosome interactions with the outer mitochondrial membrane and blocks the inappropriate interaction of ribosomes translating non-secretory nascent polypeptides with translocation sites in the membrane of the endoplasmic reticulum. EGD2 may also be involved in transcription regulation. The sequence is that of Nascent polypeptide-associated complex subunit alpha (EGD2) from Meyerozyma guilliermondii (strain ATCC 6260 / CBS 566 / DSM 6381 / JCM 1539 / NBRC 10279 / NRRL Y-324) (Yeast).